The chain runs to 490 residues: AP-5 complex subunit mu-1 (490 aa).

The MHD domain maps to 206-476; it reads KPQVSISITE…LISSDYYIWN (271 aa).

The protein belongs to the adaptor complexes medium subunit family. Probably part of the adaptor protein complex 5 (AP-5) a tetramer composed of AP5B1, AP5M1, AP5S1 and AP5Z1. In terms of tissue distribution, expressed in various tumor cell lines including Jurkat, Hep-G2 and HeLa.

It is found in the cytoplasm. The protein localises to the cytosol. Its subcellular location is the late endosome membrane. The protein resides in the lysosome membrane. In terms of biological role, as part of AP-5, a probable fifth adaptor protein complex it may be involved in endosomal transport. According to PubMed:18395520, it may play a role in cell death. This Homo sapiens (Human) protein is AP-5 complex subunit mu-1 (AP5M1).